The primary structure comprises 350 residues: Eukaryotic translation initiation factor 3 subunit I (350 aa).

WD repeat units follow at residues Gly8 to Glu49, His51 to Thr89, Glu91 to Thr135, Gln149 to Ser188, Glu198 to Lys240, and Gly296 to Tyr335.

Belongs to the eIF-3 subunit I family. In terms of assembly, component of the eukaryotic translation initiation factor 3 (eIF-3) complex.

It is found in the cytoplasm. Functionally, component of the eukaryotic translation initiation factor 3 (eIF-3) complex, which is involved in protein synthesis of a specialized repertoire of mRNAs and, together with other initiation factors, stimulates binding of mRNA and methionyl-tRNAi to the 40S ribosome. The eIF-3 complex specifically targets and initiates translation of a subset of mRNAs involved in cell proliferation. In Scheffersomyces stipitis (strain ATCC 58785 / CBS 6054 / NBRC 10063 / NRRL Y-11545) (Yeast), this protein is Eukaryotic translation initiation factor 3 subunit I.